Reading from the N-terminus, the 200-residue chain is Peptidyl-tRNA hydrolase (200 aa).

Tyr-15 contacts tRNA. Residue His-20 is the Proton acceptor of the active site. TRNA-binding residues include Tyr-66, Asn-68, and Asn-114.

This sequence belongs to the PTH family. In terms of assembly, monomer.

The protein localises to the cytoplasm. It catalyses the reaction an N-acyl-L-alpha-aminoacyl-tRNA + H2O = an N-acyl-L-amino acid + a tRNA + H(+). Its function is as follows. Hydrolyzes ribosome-free peptidyl-tRNAs (with 1 or more amino acids incorporated), which drop off the ribosome during protein synthesis, or as a result of ribosome stalling. Functionally, catalyzes the release of premature peptidyl moieties from peptidyl-tRNA molecules trapped in stalled 50S ribosomal subunits, and thus maintains levels of free tRNAs and 50S ribosomes. This is Peptidyl-tRNA hydrolase from Paraburkholderia xenovorans (strain LB400).